The sequence spans 331 residues: ATPase GET3 (331 aa).

32–39 (KGGVGKTT) serves as a coordination point for ATP. The active site involves Asp-61. Glu-235 and Asn-262 together coordinate ATP. Zn(2+) contacts are provided by Cys-273 and Cys-276.

It belongs to the arsA ATPase family. As to quaternary structure, homodimer.

It localises to the cytoplasm. The protein localises to the endoplasmic reticulum. ATPase required for the post-translational delivery of tail-anchored (TA) proteins to the endoplasmic reticulum. Recognizes and selectively binds the transmembrane domain of TA proteins in the cytosol. This complex then targets to the endoplasmic reticulum by membrane-bound receptors, where the tail-anchored protein is released for insertion. This process is regulated by ATP binding and hydrolysis. ATP binding drives the homodimer towards the closed dimer state, facilitating recognition of newly synthesized TA membrane proteins. ATP hydrolysis is required for insertion. Subsequently, the homodimer reverts towards the open dimer state, lowering its affinity for the membrane-bound receptor, and returning it to the cytosol to initiate a new round of targeting. This is ATPase GET3 from Malassezia globosa (strain ATCC MYA-4612 / CBS 7966) (Dandruff-associated fungus).